A 398-amino-acid chain; its full sequence is Acetate kinase 1 (398 aa).

A Mg(2+)-binding site is contributed by Asn10. Lys17 contributes to the ATP binding site. Residue Arg89 coordinates substrate. Asp146 serves as the catalytic Proton donor/acceptor. ATP is bound by residues 206 to 210 (HLGNG), 281 to 283 (DCR), and 329 to 333 (GIGEN). Position 384 (Glu384) interacts with Mg(2+).

This sequence belongs to the acetokinase family. In terms of assembly, homodimer. Requires Mg(2+) as cofactor. It depends on Mn(2+) as a cofactor.

Its subcellular location is the cytoplasm. It catalyses the reaction acetate + ATP = acetyl phosphate + ADP. It participates in metabolic intermediate biosynthesis; acetyl-CoA biosynthesis; acetyl-CoA from acetate: step 1/2. Catalyzes the formation of acetyl phosphate from acetate and ATP. Can also catalyze the reverse reaction. The polypeptide is Acetate kinase 1 (Neisseria meningitidis serogroup B (strain ATCC BAA-335 / MC58)).